We begin with the raw amino-acid sequence, 668 residues long: DNA ligase (668 aa).

NAD(+)-binding positions include aspartate 37–aspartate 41, serine 86–methionine 87, and glutamate 116. Lysine 118 functions as the N6-AMP-lysine intermediate in the catalytic mechanism. 4 residues coordinate NAD(+): arginine 139, glutamate 173, lysine 288, and lysine 312. Residues cysteine 406, cysteine 409, cysteine 424, and cysteine 429 each coordinate Zn(2+). The BRCT domain occupies isoleucine 591 to lysine 668.

Belongs to the NAD-dependent DNA ligase family. LigA subfamily. Mg(2+) is required as a cofactor. The cofactor is Mn(2+).

The catalysed reaction is NAD(+) + (deoxyribonucleotide)n-3'-hydroxyl + 5'-phospho-(deoxyribonucleotide)m = (deoxyribonucleotide)n+m + AMP + beta-nicotinamide D-nucleotide.. Its function is as follows. DNA ligase that catalyzes the formation of phosphodiester linkages between 5'-phosphoryl and 3'-hydroxyl groups in double-stranded DNA using NAD as a coenzyme and as the energy source for the reaction. It is essential for DNA replication and repair of damaged DNA. The polypeptide is DNA ligase (Lactobacillus acidophilus (strain ATCC 700396 / NCK56 / N2 / NCFM)).